We begin with the raw amino-acid sequence, 453 residues long: Aspartate aminotransferase, chloroplastic (453 aa).

The N-terminal 44 residues, 1 to 44 (MASLMLSLGSTSLLPREINKDKLKLGTSASNPFLKAKSFSRVTM), are a transit peptide targeting the chloroplast. Glycine 85, tryptophan 181, and asparagine 234 together coordinate L-aspartate. N6-(pyridoxal phosphate)lysine is present on lysine 298. Arginine 427 is an L-aspartate binding site.

This sequence belongs to the class-I pyridoxal-phosphate-dependent aminotransferase family. Homodimer. Pyridoxal 5'-phosphate serves as cofactor.

It is found in the plastid. The protein resides in the chloroplast. It localises to the amyloplast. It carries out the reaction L-aspartate + 2-oxoglutarate = oxaloacetate + L-glutamate. Functionally, amino acid aminotransferase important for the metabolism of amino acids and Krebs-cycle related organic acids. No activity with D-Asp or D-Ala as amino donors. In plants, it is involved in nitrogen metabolism and in aspects of carbon and energy metabolism. The polypeptide is Aspartate aminotransferase, chloroplastic (ASP5) (Arabidopsis thaliana (Mouse-ear cress)).